We begin with the raw amino-acid sequence, 331 residues long: Glycerol-3-phosphate dehydrogenase [NAD(P)+] (331 aa).

NADPH is bound by residues Trp-11 and Lys-101. Residues Lys-101, Gly-132, and Ser-134 each coordinate sn-glycerol 3-phosphate. NADPH is bound at residue Ala-136. The sn-glycerol 3-phosphate site is built by Lys-188, Asp-241, Ser-251, Arg-252, and Asn-253. Lys-188 serves as the catalytic Proton acceptor. Arg-252 provides a ligand contact to NADPH. Glu-278 provides a ligand contact to NADPH.

This sequence belongs to the NAD-dependent glycerol-3-phosphate dehydrogenase family.

The protein localises to the cytoplasm. It catalyses the reaction sn-glycerol 3-phosphate + NAD(+) = dihydroxyacetone phosphate + NADH + H(+). The catalysed reaction is sn-glycerol 3-phosphate + NADP(+) = dihydroxyacetone phosphate + NADPH + H(+). The protein operates within membrane lipid metabolism; glycerophospholipid metabolism. Functionally, catalyzes the reduction of the glycolytic intermediate dihydroxyacetone phosphate (DHAP) to sn-glycerol 3-phosphate (G3P), the key precursor for phospholipid synthesis. This chain is Glycerol-3-phosphate dehydrogenase [NAD(P)+], found in Phytoplasma mali (strain AT).